The following is a 145-amino-acid chain: MIALIQRVTRASVTVEGEVTGEIGAGLLVLLGVEKDDDEQKANRLCERVLGYRIFSDAEGKMNLNVQQAGGSVLVVSQFTLAADTERGMRPSFSKGASPDRAEALYDYFVERCRQQEMNTQTGRFAADMQVSLVNDGPVTFWLQV.

The Gly-cisPro motif, important for rejection of L-amino acids motif lies at 137-138; the sequence is GP.

It belongs to the DTD family. As to quaternary structure, homodimer.

It localises to the cytoplasm. It catalyses the reaction glycyl-tRNA(Ala) + H2O = tRNA(Ala) + glycine + H(+). The enzyme catalyses a D-aminoacyl-tRNA + H2O = a tRNA + a D-alpha-amino acid + H(+). An aminoacyl-tRNA editing enzyme that deacylates mischarged D-aminoacyl-tRNAs. Also deacylates mischarged glycyl-tRNA(Ala), protecting cells against glycine mischarging by AlaRS. Acts via tRNA-based rather than protein-based catalysis; rejects L-amino acids rather than detecting D-amino acids in the active site. By recycling D-aminoacyl-tRNA to D-amino acids and free tRNA molecules, this enzyme counteracts the toxicity associated with the formation of D-aminoacyl-tRNA entities in vivo and helps enforce protein L-homochirality. This is D-aminoacyl-tRNA deacylase from Escherichia coli O139:H28 (strain E24377A / ETEC).